The sequence spans 180 residues: MSKKSNKSLAFSLLGLIVSMVLLSFAAVPLYNLFCKVTGYGGTTNRETVSIYSKVKGTRPIIIEFDANVDKNLPWRFIPRQQRVQIVPGQNTLVFYETENLSDNDIIGTSIYNVTPNKAGKYFVKIHCFCFEEQLLKAGEKVLMPVTFYIDKDFENDPEMRDVKVLTLSYSFFKVRDVKK.

Residues M1–S8 lie on the Cytoplasmic side of the membrane. Residues L9–P29 traverse the membrane as a helical; Signal-anchor for type II membrane protein segment. Topologically, residues L30–K180 are periplasmic.

This sequence belongs to the COX11/CtaG family.

The protein resides in the cell inner membrane. Exerts its effect at some terminal stage of cytochrome c oxidase synthesis, probably by being involved in the insertion of the copper B into subunit I. The chain is Cytochrome c oxidase assembly protein CtaG from Rickettsia bellii (strain RML369-C).